The following is a 546-amino-acid chain: Major facilitator superfamily transporter MPN_077 (546 aa).

Transmembrane regions (helical) follow at residues 2–22 (WGLV…IDFI), 62–82 (WTIT…VVKF), 88–108 (VMIM…GSPL), 179–199 (AFFI…IAYA), 220–240 (FWGF…PGVG), 248–268 (VWVV…FAWF), 305–325 (LLAI…QTWF), 344–364 (PILL…LSPF), 377–397 (FIFT…ATLG), 401–421 (VVGF…GWSL), 442–462 (IIFG…DIIT), and 485–505 (IAAI…IIYL).

This sequence belongs to the major facilitator superfamily.

Its subcellular location is the cell membrane. The polypeptide is Major facilitator superfamily transporter MPN_077 (Mycoplasma pneumoniae (strain ATCC 29342 / M129 / Subtype 1) (Mycoplasmoides pneumoniae)).